The sequence spans 180 residues: FMN reductase (NADH) RutF (180 aa).

Belongs to the non-flavoprotein flavin reductase family. RutF subfamily.

The catalysed reaction is FMNH2 + NAD(+) = FMN + NADH + 2 H(+). In terms of biological role, catalyzes the reduction of FMN to FMNH2 which is used to reduce pyrimidine by RutA via the Rut pathway. The protein is FMN reductase (NADH) RutF of Variovorax paradoxus (strain S110).